A 354-amino-acid chain; its full sequence is uncharacterized protein (354 aa).

It belongs to the asfivirus B354L family.

This is an uncharacterized protein from Ornithodoros (relapsing fever ticks).